Consider the following 345-residue polypeptide: Phosphoribosylformylglycinamidine cyclo-ligase (345 aa).

This sequence belongs to the AIR synthase family.

It is found in the cytoplasm. The enzyme catalyses 2-formamido-N(1)-(5-O-phospho-beta-D-ribosyl)acetamidine + ATP = 5-amino-1-(5-phospho-beta-D-ribosyl)imidazole + ADP + phosphate + H(+). It participates in purine metabolism; IMP biosynthesis via de novo pathway; 5-amino-1-(5-phospho-D-ribosyl)imidazole from N(2)-formyl-N(1)-(5-phospho-D-ribosyl)glycinamide: step 2/2. The chain is Phosphoribosylformylglycinamidine cyclo-ligase from Escherichia coli O6:K15:H31 (strain 536 / UPEC).